A 692-amino-acid chain; its full sequence is TBC1 domain family member 14 (692 aa).

Ser91 is modified (phosphoserine). 2 disordered regions span residues 270–303 and 315–335; these read NAQK…RKNL and LEDR…KHRQ. Residues 271 to 287 are compositionally biased toward basic and acidic residues; sequence AQKDAKKLQKEYEDKAG. At Ser294 the chain carries Phosphoserine. Over residues 326-335 the composition is skewed to basic and acidic residues; it reads PAEEAQKHRQ. Residues 400-610 enclose the Rab-GAP TBC domain; that stretch reads GIPPSVRGKV…RVWDVFCRDG (211 aa).

Interacts with ULK1. May interact with RAB11A and RAB11B, but does not exhibit any GTPase-activating activity toward these proteins. Interacts with TRAPPC8.

Its subcellular location is the golgi apparatus. It localises to the cis-Golgi network. The protein resides in the trans-Golgi network. Its function is as follows. Plays a role in the regulation of starvation-induced autophagosome formation. Together with the TRAPPIII complex, regulates a constitutive trafficking step from peripheral recycling endosomes to the early Golgi, maintaining the cycling pool of ATG9 required for initiation of autophagy. This chain is TBC1 domain family member 14 (TBC1D14), found in Bos taurus (Bovine).